We begin with the raw amino-acid sequence, 147 residues long: MRYAPEFKKSPSHLLKKFAVCDIPLYDICDYNVSRDRCKELGCCFYKGICYEKAVPSYVQVFSALIVIIAGAFVITIIYRVIQESRREKEVPTEAPVSAKSSVQVETQPPSSAGAGSKAPSVERPQSKESGREDASLIVTEEEETED.

Residues 1–57 lie on the Extracellular side of the membrane; that stretch reads MRYAPEFKKSPSHLLKKFAVCDIPLYDICDYNVSRDRCKELGCCFYKGICYEKAVPS. Residues 58–78 form a helical membrane-spanning segment; sequence YVQVFSALIVIIAGAFVITII. At 79–147 the chain is on the cytoplasmic side; it reads YRVIQESRRE…IVTEEEETED (69 aa). The interval 86–147 is disordered; sequence RREKEVPTEA…IVTEEEETED (62 aa). Residues 99-108 show a composition bias toward polar residues; sequence AKSSVQVETQ. The span at 109–120 shows a compositional bias: low complexity; it reads PPSSAGAGSKAP. Basic and acidic residues predominate over residues 125–135; it reads PQSKESGREDA.

Its subcellular location is the membrane. The polypeptide is Testis-expressed protein 29 (TEX29) (Bos taurus (Bovine)).